The chain runs to 157 residues: 2-C-methyl-D-erythritol 2,4-cyclodiphosphate synthase (157 aa).

A divalent metal cation contacts are provided by D8 and H10. 4-CDP-2-C-methyl-D-erythritol 2-phosphate is bound by residues 8 to 10 and 34 to 35; these read DIH and HS. H42 serves as a coordination point for a divalent metal cation. Residues 56–58, 61–65, 132–135, and R142 contribute to the 4-CDP-2-C-methyl-D-erythritol 2-phosphate site; these read DIG, FPDTD, and TTNE.

The protein belongs to the IspF family. As to quaternary structure, homotrimer. It depends on a divalent metal cation as a cofactor.

It catalyses the reaction 4-CDP-2-C-methyl-D-erythritol 2-phosphate = 2-C-methyl-D-erythritol 2,4-cyclic diphosphate + CMP. Its pathway is isoprenoid biosynthesis; isopentenyl diphosphate biosynthesis via DXP pathway; isopentenyl diphosphate from 1-deoxy-D-xylulose 5-phosphate: step 4/6. Its function is as follows. Involved in the biosynthesis of isopentenyl diphosphate (IPP) and dimethylallyl diphosphate (DMAPP), two major building blocks of isoprenoid compounds. Catalyzes the conversion of 4-diphosphocytidyl-2-C-methyl-D-erythritol 2-phosphate (CDP-ME2P) to 2-C-methyl-D-erythritol 2,4-cyclodiphosphate (ME-CPP) with a corresponding release of cytidine 5-monophosphate (CMP). The protein is 2-C-methyl-D-erythritol 2,4-cyclodiphosphate synthase of Chloroherpeton thalassium (strain ATCC 35110 / GB-78).